A 631-amino-acid chain; its full sequence is Probable potassium transport system protein Kup (631 aa).

12 consecutive transmembrane segments (helical) span residues 17–37, 56–76, 109–129, 147–167, 174–194, 215–235, 256–276, 288–308, 346–366, 378–398, 403–423, and 428–448; these read IGLL…SPLY, ILGV…FKYM, MMMV…SMIT, GLDH…FLIQ, IGVL…ALGV, FFII…LALT, WFIL…ALVL, LLAP…ATII, IYIG…VIGF, VAVT…MLML, PLLA…FFAA, and IFQG…LMTT.

This sequence belongs to the HAK/KUP transporter (TC 2.A.72) family.

It localises to the cell inner membrane. The enzyme catalyses K(+)(in) + H(+)(in) = K(+)(out) + H(+)(out). Functionally, transport of potassium into the cell. Likely operates as a K(+):H(+) symporter. The chain is Probable potassium transport system protein Kup from Pseudomonas savastanoi pv. phaseolicola (strain 1448A / Race 6) (Pseudomonas syringae pv. phaseolicola (strain 1448A / Race 6)).